We begin with the raw amino-acid sequence, 414 residues long: Multifunctional CCA protein (414 aa).

Residues glycine 8 and arginine 11 each coordinate ATP. The CTP site is built by glycine 8 and arginine 11. Aspartate 21 and aspartate 23 together coordinate Mg(2+). Residues arginine 91, arginine 143, and arginine 146 each contribute to the ATP site. CTP is bound by residues arginine 91, arginine 143, and arginine 146. Positions 232–333 (TGVHVMMVID…TRLVERCDAL (102 aa)) constitute an HD domain.

Belongs to the tRNA nucleotidyltransferase/poly(A) polymerase family. Bacterial CCA-adding enzyme type 1 subfamily. Monomer. Can also form homodimers and oligomers. The cofactor is Mg(2+). Ni(2+) serves as cofactor.

The catalysed reaction is a tRNA precursor + 2 CTP + ATP = a tRNA with a 3' CCA end + 3 diphosphate. It catalyses the reaction a tRNA with a 3' CCA end + 2 CTP + ATP = a tRNA with a 3' CCACCA end + 3 diphosphate. Catalyzes the addition and repair of the essential 3'-terminal CCA sequence in tRNAs without using a nucleic acid template. Adds these three nucleotides in the order of C, C, and A to the tRNA nucleotide-73, using CTP and ATP as substrates and producing inorganic pyrophosphate. tRNA 3'-terminal CCA addition is required both for tRNA processing and repair. Also involved in tRNA surveillance by mediating tandem CCA addition to generate a CCACCA at the 3' terminus of unstable tRNAs. While stable tRNAs receive only 3'-terminal CCA, unstable tRNAs are marked with CCACCA and rapidly degraded. The sequence is that of Multifunctional CCA protein from Cupriavidus metallidurans (strain ATCC 43123 / DSM 2839 / NBRC 102507 / CH34) (Ralstonia metallidurans).